The sequence spans 693 residues: Polyribonucleotide nucleotidyltransferase (693 aa).

The Mg(2+) site is built by aspartate 486 and aspartate 492. The region spanning 553–612 (PRFSSMRIDTEKIKDVIGKGGATIRSITEQTGTTIEIEDDGSVKIAATDKAAAANARRLI) is the KH domain. The S1 motif domain maps to 622 to 690 (GRIYDAKVTK…RQGRVRLSIK (69 aa)).

The protein belongs to the polyribonucleotide nucleotidyltransferase family. Component of the RNA degradosome, which is a multiprotein complex involved in RNA processing and mRNA degradation. Requires Mg(2+) as cofactor.

It is found in the cytoplasm. The catalysed reaction is RNA(n+1) + phosphate = RNA(n) + a ribonucleoside 5'-diphosphate. In terms of biological role, involved in mRNA degradation. Catalyzes the phosphorolysis of single-stranded polyribonucleotides processively in the 3'- to 5'-direction. In Dichelobacter nodosus (strain VCS1703A), this protein is Polyribonucleotide nucleotidyltransferase.